Here is a 294-residue protein sequence, read N- to C-terminus: Cytidine deaminase (294 aa).

CMP/dCMP-type deaminase domains follow at residues 48–168 and 186–294; these read DEDA…FGPK and LTGD…VLLG. 89 to 91 contacts substrate; the sequence is NME. His-102 is a binding site for Zn(2+). The Proton donor role is filled by Glu-104. Zn(2+) contacts are provided by Cys-129 and Cys-132.

The protein belongs to the cytidine and deoxycytidylate deaminase family. As to quaternary structure, homodimer. The cofactor is Zn(2+).

It catalyses the reaction cytidine + H2O + H(+) = uridine + NH4(+). The enzyme catalyses 2'-deoxycytidine + H2O + H(+) = 2'-deoxyuridine + NH4(+). This enzyme scavenges exogenous and endogenous cytidine and 2'-deoxycytidine for UMP synthesis. The polypeptide is Cytidine deaminase (Salmonella enteritidis PT4 (strain P125109)).